We begin with the raw amino-acid sequence, 217 residues long: Guanylate kinase (217 aa).

One can recognise a Guanylate kinase-like domain in the interval 10-190 (GLLIILSSPS…TEEALKTIIT (181 aa)). Position 17–24 (17–24 (SPSGAGKS)) interacts with ATP.

This sequence belongs to the guanylate kinase family.

Its subcellular location is the cytoplasm. The enzyme catalyses GMP + ATP = GDP + ADP. In terms of biological role, essential for recycling GMP and indirectly, cGMP. The chain is Guanylate kinase from Ruegeria sp. (strain TM1040) (Silicibacter sp.).